We begin with the raw amino-acid sequence, 159 residues long: 8-oxo-dGTP diphosphatase (159 aa).

The Nudix hydrolase domain occupies 1–133 (MTKLATICYI…DYEIFKWILD (133 aa)). Mg(2+) contacts are provided by Gly38, Glu53, Glu56, and Glu57. Residues 38–59 (GKLEKGESPDECARREIFEETH) carry the Nudix box motif.

This sequence belongs to the Nudix hydrolase family. As to quaternary structure, homotrimer. It depends on Mg(2+) as a cofactor.

The catalysed reaction is 8-oxo-dGTP + H2O = 8-oxo-dGMP + diphosphate + H(+). Functionally, involved in the DNA repair system to avoid A.T to G.C transversions. Degrades 8-oxo-dGTP to the monophosphate, but is also active on all of the nucleoside triphosphates. This Streptococcus mutans serotype c (strain ATCC 700610 / UA159) protein is 8-oxo-dGTP diphosphatase (mutX).